Reading from the N-terminus, the 127-residue chain is Biogenesis of lysosome-related organelles complex 1 subunit BLS1 (127 aa).

The tract at residues 103 to 127 (KNSHNTNHGGCNKTKNSSKDKLLDK) is disordered. Positions 105–117 (SHNTNHGGCNKTK) are enriched in polar residues.

It belongs to the BLOC1S1 family. As to quaternary structure, component of the biogenesis of lysosome-related organelles complex-1 (BLOC-1).

It is found in the endosome. In terms of biological role, component of the biogenesis of lysosome-related organelles complex-1 (BLOC-1), a complex involved in endosomal cargo sorting. This Vanderwaltozyma polyspora (strain ATCC 22028 / DSM 70294 / BCRC 21397 / CBS 2163 / NBRC 10782 / NRRL Y-8283 / UCD 57-17) (Kluyveromyces polysporus) protein is Biogenesis of lysosome-related organelles complex 1 subunit BLS1 (BLS1).